The following is a 296-amino-acid chain: NADH-cytochrome b5 reductase 2 (296 aa).

A helical transmembrane segment spans residues 2 to 24; the sequence is LVALAAIGVTVLLFLIKALGSGA. Positions 35 to 147 constitute an FAD-binding FR-type domain; the sequence is NAKYPLPLIE…RGPNGLLVYK (113 aa). Residues 127-142 and 166-201 contribute to the FAD site; these read DSLK…GPNG and VAKH…KCYL.

This sequence belongs to the flavoprotein pyridine nucleotide cytochrome reductase family. The cofactor is FAD.

The protein resides in the membrane. The catalysed reaction is 2 Fe(III)-[cytochrome b5] + NADH = 2 Fe(II)-[cytochrome b5] + NAD(+) + H(+). Functionally, NADH-cytochrome b5 reductases are involved in desaturation and elongation of fatty acids, cholesterol biosynthesis and drug metabolism. This chain is NADH-cytochrome b5 reductase 2 (cyb5r2), found in Xenopus laevis (African clawed frog).